We begin with the raw amino-acid sequence, 494 residues long: MENLSERFNVLQDQLMNIYEAAEHTLETQIAHWTLLRREAVLLYYARQKGITRLGYQPVPTLAVSEAKAKEAIGIMLQLQSLQKSEYASENWTLVDTSAETYNNVPEHHFKKGPVPVEVIYDKEPENANVYTMWKYVYYMDPEDVWHKTTSGVNQTGIYYLHGDFKHYYVLFADGARMYSKTGQWEVKVNKETVFAPVTSSTPPGSPGQRDPDATSKTPATSSDSTTRSSDKQSQQADPRRKGYGRRPSSRTRRQETQQRRSRSRYRSQSNSRSRSQSQTRALGATSVSRSSRSPSVTQIRNRRSRSQSRGRGGRGSSTDTTTKRRRSRSSSSNTRKRSQRGERGRGERGGRGKRRDRSSSTSPTPKRSRAGSRSSRQRGVSPEQVGRSLQSVSSKHRGRLGRLLEEALDPPVIICKGGANTLKCFRNRARHKYTGLFKAFSTTWSWVAGDSTERLGRPRMLISFTSTNQRKDFDETVKYPKGVETAYGNLDSL.

Residues 1–201 form a transactivation domain region; that stretch reads MENLSERFNV…ETVFAPVTSS (201 aa). Residues 196–397 are disordered; the sequence is APVTSSTPPG…RSLQSVSSKH (202 aa). The span at 221-236 shows a compositional bias: low complexity; the sequence is TSSDSTTRSSDKQSQQ. Residues 242-252 show a composition bias toward basic residues; that stretch reads KGYGRRPSSRT. Over residues 267 to 297 the composition is skewed to low complexity; the sequence is RSQSNSRSRSQSQTRALGATSVSRSSRSPSV. Basic residues-rich tracts occupy residues 301-313 and 324-339; these read RNRRSRSQSRGRG and KRRRSRSSSSNTRKRS. A compositionally biased stretch (basic and acidic residues) spans 340–351; it reads QRGERGRGERGG. The segment covering 360–382 has biased composition (low complexity); sequence SSTSPTPKRSRAGSRSSRQRGVS. The segment at 410–494 is DNA-binding domain; it reads DPPVIICKGG…ETAYGNLDSL (85 aa). Residue Lys-417 forms a Glycyl lysine isopeptide (Lys-Gly) (interchain with G-Cter in SUMO) linkage.

This sequence belongs to the papillomaviridae E2 protein family. As to quaternary structure, binds DNA as homodimer. Interacts with protein E1; this interaction greatly increases E1 DNA-binding activity. Interacts with protein L1; this interaction enhances E2-dependent replication and transcription activation. Interacts with protein L2; this interaction inhibits E2 transcriptional activity but not DNA replication function E2. Interacts with protein E7; this interaction inhibits E7 oncogenic activity. Interacts with host TAF1; this interaction modulates E2-dependent transcriptional regulation. Interacts with host BRD4; this interaction mediates E2 transcriptional activation function. Additionally, the interaction with host BRD4 on mitotic chromosomes mediates tethering of the viral genome. Interacts with host TOPBP1; this interaction is required for optimal viral DNA replication. Phosphorylated. In terms of processing, sumoylation plays a regulatory role in E2 transcriptional activity.

It localises to the host nucleus. Functionally, plays a role in the initiation of viral DNA replication. A dimer of E2 interacts with a dimer of E1 in order to improve specificity of E1 DNA binding activity. Once the complex recognizes and binds DNA at specific sites, the E2 dimer is removed from DNA. E2 also regulates viral transcription through binding to the E2RE response element (5'-ACCNNNNNNGGT-3') present in multiple copies in the regulatory regions of the viral genome. Activates or represses transcription depending on E2RE's position with regards to proximal promoter elements including the TATA-box. Repression occurs by sterically hindering the assembly of the transcription initiation complex. This is Regulatory protein E2 from Human papillomavirus 12.